The sequence spans 661 residues: Sperm transmembrane protein 9 (661 aa).

Positions 1–16 (MNVILVLVVLFFAGDC) are cleaved as a signal peptide. Residues 17-618 (AKIRKIIDFL…MTNRLMKNYE (602 aa)) lie on the Extracellular side of the membrane. The EGF-like 1 domain occupies 52–90 (NFNPCLENPKICSNRGKCLHENGNFYCICPVTHYGKTCE). 3 disulfide bridges follow: Cys-56-Cys-69, Cys-63-Cys-78, and Cys-80-Cys-89. N-linked (GlcNAc...) asparagine glycans are attached at residues Asn-105, Asn-106, Asn-134, and Asn-190. The EGF-like 2 domain maps to 210 to 259 (QISACFDTQCDNGGICEDVVDWKTKTVTATCKCPSAIELIGGTVTGENCE). Intrachain disulfides connect Cys-214-Cys-225, Cys-219-Cys-240, and Cys-242-Cys-258. Residues Asn-279, Asn-290, Asn-316, and Asn-338 are each glycosylated (N-linked (GlcNAc...) asparagine). The Cell attachment site motif lies at 377–379 (RGD). EGF-like domains follow at residues 377-414 (RGDR…EKCE), 519-557 (HTNP…SLCE), and 559-600 (VDDS…LDCN). 9 disulfide bridges follow: Cys-385/Cys-402, Cys-393/Cys-404, Cys-413/Cys-419, Cys-523/Cys-534, Cys-528/Cys-545, Cys-547/Cys-556, Cys-563/Cys-576, Cys-571/Cys-588, and Cys-590/Cys-599. The N-linked (GlcNAc...) asparagine glycan is linked to Asn-549. A helical transmembrane segment spans residues 619 to 639 (FSLPLVACFVSLAILLPVIVI). The Cytoplasmic portion of the chain corresponds to 640–661 (SRRRQGRVEEAKKTSEVKTENP).

As to expression, expressed in spermatids, during spermogenesis expression is primarily localized to the pseudopod.

The protein localises to the cytoplasm. It is found in the membrane. Required for fertilization. May be required for cell adhesion and/or function as a signaling molecule. This is Sperm transmembrane protein 9 (spe-9) from Caenorhabditis elegans.